A 306-amino-acid polypeptide reads, in one-letter code: B- and T-lymphocyte attenuator (306 aa).

Residues 1 to 29 form the signal peptide; sequence MKTVPAMLGTPRLFREFFILHLGLWSILC. At 30–183 the chain is on the extracellular side; that stretch reads EKATKRNDEE…ERPGRTWLLY (154 aa). In terms of domain architecture, Ig-like V-type spans 37–139; the sequence is DEECPVQLTI…SQVINSHSVT (103 aa). 3 disulfide bridges follow: Cys-40-Cys-69, Cys-64-Cys-124, and Cys-78-Cys-85. Residues Asn-74, Asn-81, Asn-101, Asn-119, Asn-148, and Asn-165 are each glycosylated (N-linked (GlcNAc...) asparagine). Residues 184–204 form a helical membrane-spanning segment; that stretch reads TLLPLGALLLLLACVCLLCFL. The Cytoplasmic portion of the chain corresponds to 205 to 306; that stretch reads KRIQGKEKKP…TEYASICVRS (102 aa).

In terms of assembly, interacts with tyrosine phosphatases PTPN6/SHP-1 and PTPN11/SHP-2. Interacts with TNFRSF14/HVEM (via cysteine-rich domain 1). In terms of processing, phosphorylated on Tyr residues by TNFRSF14 and by antigen receptors cross-linking, both inducing association with PTPN6 and PTPN11. Post-translationally, N-glycosylated. Expressed in splenic T- and B-cells as well as lymph node tissues but very weakly in somatic tissues. Also expressed in macrophages, NK cells and dendritic cells. A polymorphic tissue distribution between several strains is seen.

Its subcellular location is the cell membrane. Its function is as follows. Inhibitory receptor on lymphocytes that negatively regulates antigen receptor signaling via PTPN6/SHP-1 and PTPN11/SHP-2. May interact in cis (on the same cell) or in trans (on other cells) with TNFRSF14. In cis interactions, appears to play an immune regulatory role inhibiting in trans interactions in naive T cells to maintain a resting state. In trans interactions, can predominate during adaptive immune response to provide survival signals to effector T cells. The sequence is that of B- and T-lymphocyte attenuator from Mus musculus (Mouse).